Reading from the N-terminus, the 354-residue chain is Histidinol-phosphate aminotransferase (354 aa).

Position 222 is an N6-(pyridoxal phosphate)lysine (K222).

This sequence belongs to the class-II pyridoxal-phosphate-dependent aminotransferase family. Histidinol-phosphate aminotransferase subfamily. In terms of assembly, homodimer. Requires pyridoxal 5'-phosphate as cofactor.

The enzyme catalyses L-histidinol phosphate + 2-oxoglutarate = 3-(imidazol-4-yl)-2-oxopropyl phosphate + L-glutamate. It participates in amino-acid biosynthesis; L-histidine biosynthesis; L-histidine from 5-phospho-alpha-D-ribose 1-diphosphate: step 7/9. In Staphylococcus carnosus (strain TM300), this protein is Histidinol-phosphate aminotransferase.